Reading from the N-terminus, the 916-residue chain is Internalin J (916 aa).

The N-terminal stretch at 1-25 (MKTSKIIIASLVSLTLVSNPILTFA) is a signal peptide. 14 LRR repeats span residues 94 to 115 (TLTS…EKLT), 116 to 136 (GLTK…SQNT), 137 to 157 (NLTY…TPLT), 158 to 179 (KLTY…QNPL), 180 to 200 (LTYL…HNTQ), 201 to 221 (LTEL…TPQT), 222 to 243 (QLTT…QNKL), 244 to 263 (LNRL…NQNI), 264 to 284 (QLTF…TPLT), 285 to 306 (QLTY…TLSK), 316 to 325 (DLLEIDLTHN), 338 to 357 (KIKE…DCQA), 359 to 368 (GITELDLSQN), and 380 to 402 (ELTK…NAHI). MucBP domains are found at residues 506–568 (PIKG…SQSV), 576–638 (IVAA…SQTV), 646–708 (IVAA…AQTV), 717–779 (APEK…SQTV), and 787–849 (IVAA…AQTV). Residues 862–888 (PLPDKKTTKPSNLKTTEVKKASDTLPK) are disordered. Positions 886 to 890 (LPKTG) match the LPXTG sorting signal motif. The residue at position 889 (threonine 889) is a Pentaglycyl murein peptidoglycan amidated threonine. A propeptide spans 890–916 (GDSTPWKSALLGVFLSSTALVIWKKKK) (removed by sortase).

Belongs to the internalin family.

The protein resides in the secreted. It localises to the cell wall. Involved in several steps of L.monocytogenes infection, probably improves adhesin to host cells. This chain is Internalin J (inlJ), found in Listeria monocytogenes serotype 4b (strain F2365).